A 793-amino-acid polypeptide reads, in one-letter code: Pentatricopeptide repeat-containing protein At1g03100, mitochondrial (793 aa).

A mitochondrion-targeting transit peptide spans 1–87; the sequence is MFSLRKTKLQ…REAISSISGS (87 aa). PPR repeat units lie at residues 257 to 291, 292 to 322, 330 to 364, 458 to 492, 495 to 529, 530 to 564, 565 to 599, 601 to 631, 637 to 671, 672 to 707, and 713 to 747; these read NTQV…GVKA, DANL…IDEA, FWQF…GKVA, TEEI…DSPV, DNSM…GVRT, GSSV…GIQL, DSSC…KILR, GNQK…IREV, GVHD…GHSP, NAQT…AAAT, and DQEL…NMFV.

This sequence belongs to the PPR family. P subfamily.

The protein localises to the mitochondrion. This chain is Pentatricopeptide repeat-containing protein At1g03100, mitochondrial, found in Arabidopsis thaliana (Mouse-ear cress).